Here is a 153-residue protein sequence, read N- to C-terminus: Ribonuclease H (153 aa).

In terms of domain architecture, RNase H type-1 spans 1-141 (MKHVHIFTDG…ADELARKGME (141 aa)). Asp9, Glu47, Asp69, and Asp133 together coordinate Mg(2+). Positions 123–153 (HAGHPENERADELARKGMEPFKKARRADAVK) are disordered. Residues 125-153 (GHPENERADELARKGMEPFKKARRADAVK) show a composition bias toward basic and acidic residues.

The protein belongs to the RNase H family. As to quaternary structure, monomer. Mg(2+) serves as cofactor.

Its subcellular location is the cytoplasm. It catalyses the reaction Endonucleolytic cleavage to 5'-phosphomonoester.. In terms of biological role, endonuclease that specifically degrades the RNA of RNA-DNA hybrids. The protein is Ribonuclease H of Rhizobium meliloti (strain 1021) (Ensifer meliloti).